A 144-amino-acid polypeptide reads, in one-letter code: Small ribosomal subunit protein eS17 (144 aa).

Belongs to the eukaryotic ribosomal protein eS17 family.

The sequence is that of Small ribosomal subunit protein eS17 (RPS17) from Solanum lycopersicum (Tomato).